The chain runs to 247 residues: UPF0280 protein MmarC5_0355 (247 aa).

It belongs to the UPF0280 family.

The chain is UPF0280 protein MmarC5_0355 from Methanococcus maripaludis (strain C5 / ATCC BAA-1333).